Consider the following 384-residue polypeptide: WD repeat-containing protein 55 (384 aa).

Residues 1-33 form a disordered region; that stretch reads MDPTCQESPAEDSNNEEDLDSTKAAPRIRDTPE. The segment covering 9-19 has biased composition (acidic residues); the sequence is PAEDSNNEEDL. WD repeat units lie at residues 36-75, 82-121, 125-163, 166-205, 208-247, 250-289, and 293-332; these read VLEAPASGLAFHPTRDLLAAGDVDGDVFVFAYSCQEGETK, HHLKSCRAVVFSEDGQKLVTVSKDKAIHVLDVEQGQLERR, AHSAPINSLLLVDENVLVTGDDTGGIRLWDQRKEGPLMD, QHEEYIADMALDPAKKLLLTASGDGCLGVFNIKRRRFELL, PQSGDLTSVALMKYGKKVACGSSEGTIYLFNWNGFGATSD, ALRAESIDCMVPVTENLLCTGSTDGIIRAVNILPNRVVGT, and HAGEPVEELALSHCGHFLASSGHDQRLKFWDMTQLRTVVV. Phosphoserine occurs at positions 354 and 383. Residues 362 to 384 form a disordered region; it reads LREDEEEAKAPEEVSGESDDDSD. Acidic residues predominate over residues 375–384; sequence VSGESDDDSD.

This sequence belongs to the WD repeat WDR55 family.

Its subcellular location is the nucleus. The protein localises to the nucleolus. The protein resides in the cytoplasm. Its function is as follows. Nucleolar protein that acts as a modulator of rRNA synthesis. Plays a central role during organogenesis. This chain is WD repeat-containing protein 55 (Wdr55), found in Rattus norvegicus (Rat).